Consider the following 469-residue polypeptide: Ubiquitin carboxyl-terminal hydrolase MINDY-1 (469 aa).

Positions 1–105 are disordered; the sequence is MEHHQPEHPA…RLQELPQSPR (105 aa). The span at 23 to 44 shows a compositional bias: basic and acidic residues; it reads ENHKVLSEPKEHPQDKDAKEAD. S103 carries the post-translational modification Phosphoserine. C137 serves as the catalytic Nucleophile. H319 functions as the Proton acceptor in the catalytic mechanism. Residues 388-428 form a ubiquitin-binding domain (UBD) region; the sequence is QVDQDYLIALSLQQQQPPPQGTSGLSDLELAQQLQQEEYQQ. The segment at 401 to 469 is disordered; sequence QQQPPPQGTS…PKQESDCVLL (69 aa). The span at 415 to 448 shows a compositional bias: low complexity; sequence LELAQQLQQEEYQQHQAAQAAPARAPSPQGRGAA. Position 441 is a phosphoserine (S441). Over residues 453 to 469 the composition is skewed to basic and acidic residues; sequence AAERRQRPKQESDCVLL.

Belongs to the MINDY deubiquitinase family. FAM63 subfamily.

The catalysed reaction is Thiol-dependent hydrolysis of ester, thioester, amide, peptide and isopeptide bonds formed by the C-terminal Gly of ubiquitin (a 76-residue protein attached to proteins as an intracellular targeting signal).. Functionally, hydrolase that can specifically remove 'Lys-48'-linked conjugated ubiquitin from proteins. Has exodeubiquitinase activity and has a preference for long polyubiquitin chains. May play a regulatory role at the level of protein turnover. The polypeptide is Ubiquitin carboxyl-terminal hydrolase MINDY-1 (MINDY1) (Bos taurus (Bovine)).